A 445-amino-acid chain; its full sequence is Methionine aminopeptidase 2-1 (445 aa).

The segment at 1–86 (MAAQASEDLQ…VQSEPPRVPL (86 aa)) is disordered. The span at 34 to 46 (GEAEDDSDDDADE) shows a compositional bias: acidic residues. Residues 59–74 (AKKKKKRKSKKKKKGG) show a composition bias toward basic residues. Histidine 198 serves as a coordination point for substrate. The a divalent metal cation site is built by aspartate 218, aspartate 229, and histidine 298. Histidine 306 provides a ligand contact to substrate. 2 residues coordinate a divalent metal cation: glutamate 331 and glutamate 426.

This sequence belongs to the peptidase M24A family. Methionine aminopeptidase eukaryotic type 2 subfamily. The cofactor is Co(2+). It depends on Zn(2+) as a cofactor. Mn(2+) is required as a cofactor. Fe(2+) serves as cofactor.

The protein localises to the cytoplasm. It carries out the reaction Release of N-terminal amino acids, preferentially methionine, from peptides and arylamides.. Functionally, cotranslationally removes the N-terminal methionine from nascent proteins. The N-terminal methionine is often cleaved when the second residue in the primary sequence is small and uncharged (Met-Ala-, Cys, Gly, Pro, Ser, Thr, or Val). The sequence is that of Methionine aminopeptidase 2-1 from Aspergillus flavus (strain ATCC 200026 / FGSC A1120 / IAM 13836 / NRRL 3357 / JCM 12722 / SRRC 167).